Consider the following 123-residue polypeptide: MSLTNEQIIEAIGQKSVMEIVELIKAMEETFGVTAAAAVAAGPAAGAAAAVEEQTEFNVVLAEAGDKKVNVIKAVRELTGLGLKEAKEKVDTAPQVIAEGLTKEAAEDAKKKLEEAGAKVELK.

This sequence belongs to the bacterial ribosomal protein bL12 family. As to quaternary structure, homodimer. Part of the ribosomal stalk of the 50S ribosomal subunit. Forms a multimeric L10(L12)X complex, where L10 forms an elongated spine to which 2 to 4 L12 dimers bind in a sequential fashion. Binds GTP-bound translation factors.

Functionally, forms part of the ribosomal stalk which helps the ribosome interact with GTP-bound translation factors. Is thus essential for accurate translation. The sequence is that of Large ribosomal subunit protein bL12 from Ectopseudomonas mendocina (strain ymp) (Pseudomonas mendocina).